Here is a 205-residue protein sequence, read N- to C-terminus: Thiamine-phosphate synthase (205 aa).

Residues 34–38 and asparagine 66 contribute to the 4-amino-2-methyl-5-(diphosphooxymethyl)pyrimidine site; that span reads QLRCK. Aspartate 67 and aspartate 86 together coordinate Mg(2+). Position 105 (serine 105) interacts with 4-amino-2-methyl-5-(diphosphooxymethyl)pyrimidine. 131-133 serves as a coordination point for 2-[(2R,5Z)-2-carboxy-4-methylthiazol-5(2H)-ylidene]ethyl phosphate; the sequence is TTT. Residue lysine 134 coordinates 4-amino-2-methyl-5-(diphosphooxymethyl)pyrimidine. Glycine 163 serves as a coordination point for 2-[(2R,5Z)-2-carboxy-4-methylthiazol-5(2H)-ylidene]ethyl phosphate.

It belongs to the thiamine-phosphate synthase family. It depends on Mg(2+) as a cofactor.

It carries out the reaction 2-[(2R,5Z)-2-carboxy-4-methylthiazol-5(2H)-ylidene]ethyl phosphate + 4-amino-2-methyl-5-(diphosphooxymethyl)pyrimidine + 2 H(+) = thiamine phosphate + CO2 + diphosphate. The enzyme catalyses 2-(2-carboxy-4-methylthiazol-5-yl)ethyl phosphate + 4-amino-2-methyl-5-(diphosphooxymethyl)pyrimidine + 2 H(+) = thiamine phosphate + CO2 + diphosphate. The catalysed reaction is 4-methyl-5-(2-phosphooxyethyl)-thiazole + 4-amino-2-methyl-5-(diphosphooxymethyl)pyrimidine + H(+) = thiamine phosphate + diphosphate. The protein operates within cofactor biosynthesis; thiamine diphosphate biosynthesis; thiamine phosphate from 4-amino-2-methyl-5-diphosphomethylpyrimidine and 4-methyl-5-(2-phosphoethyl)-thiazole: step 1/1. Condenses 4-methyl-5-(beta-hydroxyethyl)thiazole monophosphate (THZ-P) and 2-methyl-4-amino-5-hydroxymethyl pyrimidine pyrophosphate (HMP-PP) to form thiamine monophosphate (TMP). The polypeptide is Thiamine-phosphate synthase (Neisseria gonorrhoeae (strain ATCC 700825 / FA 1090)).